The primary structure comprises 351 residues: Photosystem II D2 protein (351 aa).

Residues 39 to 59 traverse the membrane as a helical segment; the sequence is TAYLAAGGWMTGTTFVTSWYT. H116 lines the chlorophyll a pocket. Residues 123 to 139 form a helical membrane-spanning segment; that stretch reads GFCLRQFEIARLVGIRP. The pheophytin a site is built by Q128 and N141. Residues 151-164 traverse the membrane as a helical segment; it reads VFVSVFLLYPLGQA. Residue H196 coordinates chlorophyll a. A helical transmembrane segment spans residues 206–226; the sequence is GALLCAIHGATVENTLFEDGD. H213 and F260 together coordinate a plastoquinone. A Fe cation-binding site is contributed by H213. H267 contacts Fe cation. A helical membrane pass occupies residues 277-293; the sequence is GLWTSAIGIVGLALNLR.

The protein belongs to the reaction center PufL/M/PsbA/D family. As to quaternary structure, PSII is composed of 1 copy each of membrane proteins PsbA, PsbB, PsbC, PsbD, PsbE, PsbF, PsbH, PsbI, PsbJ, PsbK, PsbL, PsbM, PsbT, PsbX, PsbY, PsbZ, Psb30/Ycf12, at least 3 peripheral proteins of the oxygen-evolving complex and a large number of cofactors. It forms dimeric complexes. It depends on The D1/D2 heterodimer binds P680, chlorophylls that are the primary electron donor of PSII, and subsequent electron acceptors. It shares a non-heme iron and each subunit binds pheophytin, quinone, additional chlorophylls, carotenoids and lipids. There is also a Cl(-1) ion associated with D1 and D2, which is required for oxygen evolution. The PSII complex binds additional chlorophylls, carotenoids and specific lipids. as a cofactor.

It is found in the plastid. The protein resides in the chloroplast thylakoid membrane. The catalysed reaction is 2 a plastoquinone + 4 hnu + 2 H2O = 2 a plastoquinol + O2. In terms of biological role, photosystem II (PSII) is a light-driven water:plastoquinone oxidoreductase that uses light energy to abstract electrons from H(2)O, generating O(2) and a proton gradient subsequently used for ATP formation. It consists of a core antenna complex that captures photons, and an electron transfer chain that converts photonic excitation into a charge separation. The D1/D2 (PsbA/PsbD) reaction center heterodimer binds P680, the primary electron donor of PSII as well as several subsequent electron acceptors. D2 is needed for assembly of a stable PSII complex. The sequence is that of Photosystem II D2 protein from Trieres chinensis (Marine centric diatom).